The chain runs to 676 residues: DNA ligase (676 aa).

Residues 35-39 (DNEYD), 84-85 (SL), and E115 each bind NAD(+). The active-site N6-AMP-lysine intermediate is K117. Positions 138, 177, 294, and 318 each coordinate NAD(+). 4 residues coordinate Zn(2+): C412, C415, C430, and C436. The BRCT domain occupies 595–676 (PTRQPLNGES…FLAFLAQYSA (82 aa)).

Belongs to the NAD-dependent DNA ligase family. LigA subfamily. Mg(2+) is required as a cofactor. Mn(2+) serves as cofactor.

It carries out the reaction NAD(+) + (deoxyribonucleotide)n-3'-hydroxyl + 5'-phospho-(deoxyribonucleotide)m = (deoxyribonucleotide)n+m + AMP + beta-nicotinamide D-nucleotide.. In terms of biological role, DNA ligase that catalyzes the formation of phosphodiester linkages between 5'-phosphoryl and 3'-hydroxyl groups in double-stranded DNA using NAD as a coenzyme and as the energy source for the reaction. It is essential for DNA replication and repair of damaged DNA. This chain is DNA ligase, found in Acinetobacter baylyi (strain ATCC 33305 / BD413 / ADP1).